The chain runs to 328 residues: UPF0285 protein Mevan_1551 (328 aa).

It belongs to the UPF0285 family.

The protein is UPF0285 protein Mevan_1551 of Methanococcus vannielii (strain ATCC 35089 / DSM 1224 / JCM 13029 / OCM 148 / SB).